Reading from the N-terminus, the 288-residue chain is MWQAISQQLSETLMFSYDIVEKVHLSGGDINECYMISDGEQRYFVKINSKDFLSKFQVEAENLRLLRQTDSVTLPELVLIGNTKSNAFIILNFLPTKPLEDTENSYKFGQQLAYLHLWGEQKEYGCDQDNYLGATLQPNAWHKKWSTFFSEQRIGWQLQLLKEKGVTFGVIDEIVEVVARQLLNHNPRPSLIHGDLWHGNVALSAFGPICYDPACYWGDRECDIAMTELFGGFNAEFYRGYEDIAPLPFGYTQRKEIYNLYHILNHCNQFGGHYLEQAQKSIDKILSY.

92 to 94 (NFL) contacts ATP. Asp-195 serves as the catalytic Proton acceptor.

It belongs to the fructosamine kinase family.

Its function is as follows. Ketoamine kinase that phosphorylates ketoamines on the third carbon of the sugar moiety to generate ketoamine 3-phosphate. The protein is Probable ketoamine kinase VV1_2562 of Vibrio vulnificus (strain CMCP6).